The primary structure comprises 338 residues: Glycerol-3-phosphate dehydrogenase [NAD(P)+] (338 aa).

Positions 12, 13, 34, and 110 each coordinate NADPH. Sn-glycerol 3-phosphate-binding residues include lysine 110, glycine 141, and serine 143. Position 145 (alanine 145) interacts with NADPH. Residues lysine 196, aspartate 249, serine 259, arginine 260, and asparagine 261 each contribute to the sn-glycerol 3-phosphate site. Residue lysine 196 is the Proton acceptor of the active site. Arginine 260 is an NADPH binding site. Positions 284 and 286 each coordinate NADPH.

The protein belongs to the NAD-dependent glycerol-3-phosphate dehydrogenase family.

It is found in the cytoplasm. The catalysed reaction is sn-glycerol 3-phosphate + NAD(+) = dihydroxyacetone phosphate + NADH + H(+). It catalyses the reaction sn-glycerol 3-phosphate + NADP(+) = dihydroxyacetone phosphate + NADPH + H(+). It functions in the pathway membrane lipid metabolism; glycerophospholipid metabolism. Catalyzes the reduction of the glycolytic intermediate dihydroxyacetone phosphate (DHAP) to sn-glycerol 3-phosphate (G3P), the key precursor for phospholipid synthesis. The protein is Glycerol-3-phosphate dehydrogenase [NAD(P)+] of Ligilactobacillus salivarius (strain UCC118) (Lactobacillus salivarius).